Reading from the N-terminus, the 212-residue chain is 3-isopropylmalate dehydratase small subunit (212 aa).

Belongs to the LeuD family. LeuD type 1 subfamily. As to quaternary structure, heterodimer of LeuC and LeuD.

It carries out the reaction (2R,3S)-3-isopropylmalate = (2S)-2-isopropylmalate. It participates in amino-acid biosynthesis; L-leucine biosynthesis; L-leucine from 3-methyl-2-oxobutanoate: step 2/4. In terms of biological role, catalyzes the isomerization between 2-isopropylmalate and 3-isopropylmalate, via the formation of 2-isopropylmaleate. The protein is 3-isopropylmalate dehydratase small subunit of Thioalkalivibrio sulfidiphilus (strain HL-EbGR7).